The sequence spans 292 residues: Elongation factor Ts (292 aa).

Positions 80 to 83 (TDFV) are involved in Mg(2+) ion dislocation from EF-Tu.

The protein belongs to the EF-Ts family.

It localises to the cytoplasm. Functionally, associates with the EF-Tu.GDP complex and induces the exchange of GDP to GTP. It remains bound to the aminoacyl-tRNA.EF-Tu.GTP complex up to the GTP hydrolysis stage on the ribosome. The protein is Elongation factor Ts of Pediococcus pentosaceus (strain ATCC 25745 / CCUG 21536 / LMG 10740 / 183-1w).